A 168-amino-acid chain; its full sequence is Dihydrofolate reductase (168 aa).

Residues 1–159 enclose the DHFR domain; that stretch reads MISFIFAMDA…YDYEFLMYEK (159 aa). 5-7 is a substrate binding site; that stretch reads IFA. NADP(+) contacts are provided by residues 6-7 and 14-19; these read FA and IGKDND. Substrate is bound at residue Asp27. Residue 43–46 coordinates NADP(+); that stretch reads GRKT. Residue Arg57 participates in substrate binding. NADP(+) contacts are provided by residues 62-65 and 95-100; these read VTSA and IGGAQL. Thr114 contributes to the substrate binding site.

Belongs to the dihydrofolate reductase family.

The enzyme catalyses (6S)-5,6,7,8-tetrahydrofolate + NADP(+) = 7,8-dihydrofolate + NADPH + H(+). It participates in cofactor biosynthesis; tetrahydrofolate biosynthesis; 5,6,7,8-tetrahydrofolate from 7,8-dihydrofolate: step 1/1. Functionally, key enzyme in folate metabolism. Catalyzes an essential reaction for de novo glycine and purine synthesis, and for DNA precursor synthesis. This is Dihydrofolate reductase (dfrA) from Bacillus subtilis (strain 168).